Reading from the N-terminus, the 262-residue chain is Type II restriction enzyme MspI (262 aa).

The catalysed reaction is Endonucleolytic cleavage of DNA to give specific double-stranded fragments with terminal 5'-phosphates.. A P subtype restriction enzyme that recognizes the double-stranded sequence 5'-CCGG-3' and cleaves after C-1. This is Type II restriction enzyme MspI (mspIR) from Moraxella sp.